The sequence spans 513 residues: Glutamyl-tRNA(Gln) amidotransferase subunit B, mitochondrial (513 aa).

It belongs to the GatB/GatE family. GatB subfamily. Subunit of the heterotrimeric GatFAB amidotransferase (AdT) complex, composed of A, B and F subunits.

It is found in the mitochondrion. The catalysed reaction is L-glutamyl-tRNA(Gln) + L-glutamine + ATP + H2O = L-glutaminyl-tRNA(Gln) + L-glutamate + ADP + phosphate + H(+). Functionally, allows the formation of correctly charged Gln-tRNA(Gln) through the transamidation of misacylated Glu-tRNA(Gln) in the mitochondria. The reaction takes place in the presence of glutamine and ATP through an activated gamma-phospho-Glu-tRNA(Gln). This is Glutamyl-tRNA(Gln) amidotransferase subunit B, mitochondrial from Debaryomyces hansenii (strain ATCC 36239 / CBS 767 / BCRC 21394 / JCM 1990 / NBRC 0083 / IGC 2968) (Yeast).